The sequence spans 399 residues: Insertion element IS116 uncharacterized 44.8 kDa protein (399 aa).

This sequence belongs to the transposase IS1111A/IS1328/IS1533 family.

This is Insertion element IS116 uncharacterized 44.8 kDa protein from Streptomyces clavuligerus.